A 430-amino-acid chain; its full sequence is Enolase (430 aa).

Gln163 contributes to the (2R)-2-phosphoglycerate binding site. Glu205 functions as the Proton donor in the catalytic mechanism. Residues Asp242, Glu287, and Asp314 each contribute to the Mg(2+) site. Residues Lys339, Arg368, Ser369, and Lys390 each contribute to the (2R)-2-phosphoglycerate site. Lys339 functions as the Proton acceptor in the catalytic mechanism.

It belongs to the enolase family. It depends on Mg(2+) as a cofactor.

It is found in the cytoplasm. Its subcellular location is the secreted. It localises to the cell surface. It catalyses the reaction (2R)-2-phosphoglycerate = phosphoenolpyruvate + H2O. It functions in the pathway carbohydrate degradation; glycolysis; pyruvate from D-glyceraldehyde 3-phosphate: step 4/5. In terms of biological role, catalyzes the reversible conversion of 2-phosphoglycerate (2-PG) into phosphoenolpyruvate (PEP). It is essential for the degradation of carbohydrates via glycolysis. This Bacillus cytotoxicus (strain DSM 22905 / CIP 110041 / 391-98 / NVH 391-98) protein is Enolase.